The following is a 254-amino-acid chain: Small ribosomal subunit protein uS2 (254 aa).

The protein belongs to the universal ribosomal protein uS2 family.

This Legionella pneumophila subsp. pneumophila (strain Philadelphia 1 / ATCC 33152 / DSM 7513) protein is Small ribosomal subunit protein uS2.